Reading from the N-terminus, the 278-residue chain is Orotidine 5'-phosphate decarboxylase (278 aa).

Residues aspartate 40, 62–64 (KTH), 93–102 (DRKFIDIGNT), tyrosine 228, and arginine 246 each bind substrate. Residue lysine 95 is the Proton donor of the active site.

Belongs to the OMP decarboxylase family.

It catalyses the reaction orotidine 5'-phosphate + H(+) = UMP + CO2. It participates in pyrimidine metabolism; UMP biosynthesis via de novo pathway; UMP from orotate: step 2/2. The sequence is that of Orotidine 5'-phosphate decarboxylase (PYR1) from Passalora fulva (Tomato leaf mold).